Reading from the N-terminus, the 195-residue chain is Iron-sulfur flavoprotein AF_1519 (195 aa).

The [4Fe-4S] cluster site is built by Cys-45, Cys-48, Cys-51, and Cys-57.

This sequence belongs to the SsuE family. Isf subfamily. In terms of assembly, homodimer. FMN is required as a cofactor. It depends on [4Fe-4S] cluster as a cofactor.

Its function is as follows. Redox-active protein probably involved in electron transport. In Archaeoglobus fulgidus (strain ATCC 49558 / DSM 4304 / JCM 9628 / NBRC 100126 / VC-16), this protein is Iron-sulfur flavoprotein AF_1519.